Reading from the N-terminus, the 335-residue chain is (+)-caryolan-1-ol synthase (335 aa).

5 residues coordinate Mg(2+): D83, D87, N220, S224, and E228. The DDXXD motif signature appears at D83–D87. The NSE/DTE motif motif lies at N220–E228.

The protein belongs to the terpene synthase family. Mg(2+) is required as a cofactor. Requires Mn(2+) as cofactor.

It catalyses the reaction (2E,6E)-farnesyl diphosphate = (+)-(E)-beta-caryophyllene + diphosphate. The catalysed reaction is (+)-(E)-beta-caryophyllene + H2O = (+)-caryolan-1-ol. It participates in secondary metabolite biosynthesis; terpenoid biosynthesis. Its function is as follows. Sesquiterpene cyclase that first catalyzes the cyclization of farnesyl diphosphate (FPP) to the bicyclic sesquiterpene (+)-beta-caryophyllene intermediate, and then its conversion to (+)-caryolan-1-ol via a second cyclization and the addition of a water molecule. The polypeptide is (+)-caryolan-1-ol synthase (gcoA) (Streptomyces griseus subsp. griseus (strain JCM 4626 / CBS 651.72 / NBRC 13350 / KCC S-0626 / ISP 5235)).